The primary structure comprises 285 residues: Bifunctional protein FolD (285 aa).

Residues 165 to 167 (GRS) and serine 190 contribute to the NADP(+) site.

It belongs to the tetrahydrofolate dehydrogenase/cyclohydrolase family. In terms of assembly, homodimer.

It catalyses the reaction (6R)-5,10-methylene-5,6,7,8-tetrahydrofolate + NADP(+) = (6R)-5,10-methenyltetrahydrofolate + NADPH. The catalysed reaction is (6R)-5,10-methenyltetrahydrofolate + H2O = (6R)-10-formyltetrahydrofolate + H(+). The protein operates within one-carbon metabolism; tetrahydrofolate interconversion. In terms of biological role, catalyzes the oxidation of 5,10-methylenetetrahydrofolate to 5,10-methenyltetrahydrofolate and then the hydrolysis of 5,10-methenyltetrahydrofolate to 10-formyltetrahydrofolate. The protein is Bifunctional protein FolD of Staphylococcus haemolyticus (strain JCSC1435).